The following is a 126-amino-acid chain: MAVPSEFKYSKEHEWVKIENNVATIGITEYAQNELGDIVFVELPETDDELNEGDTFGSVESVKTVSELYAPISGKIVEVNEELEDSPEFVNESPYEKAWMVKIEISDDSQLEELLSADQYSEMIGE.

A Lipoyl-binding domain is found at 22-104; it reads VATIGITEYA…YEKAWMVKIE (83 aa). At Lys-63 the chain carries N6-lipoyllysine.

The protein belongs to the GcvH family. As to quaternary structure, the glycine cleavage system is composed of four proteins: P, T, L and H. It depends on (R)-lipoate as a cofactor.

The glycine cleavage system catalyzes the degradation of glycine. The H protein shuttles the methylamine group of glycine from the P protein to the T protein. Its function is as follows. Is also involved in protein lipoylation via its role as an octanoyl/lipoyl carrier protein intermediate. This is Glycine cleavage system H protein from Staphylococcus epidermidis (strain ATCC 35984 / DSM 28319 / BCRC 17069 / CCUG 31568 / BM 3577 / RP62A).